The chain runs to 160 residues: Cytochrome b6-f complex subunit 4 (160 aa).

A run of 3 helical transmembrane segments spans residues 36–56 (LLYV…GLAV), 95–115 (LLGI…PFIE), and 131–151 (AVFL…TFPI).

This sequence belongs to the cytochrome b family. PetD subfamily. As to quaternary structure, the 4 large subunits of the cytochrome b6-f complex are cytochrome b6, subunit IV (17 kDa polypeptide, PetD), cytochrome f and the Rieske protein, while the 4 small subunits are PetG, PetL, PetM and PetN. The complex functions as a dimer.

The protein localises to the cellular thylakoid membrane. Functionally, component of the cytochrome b6-f complex, which mediates electron transfer between photosystem II (PSII) and photosystem I (PSI), cyclic electron flow around PSI, and state transitions. The sequence is that of Cytochrome b6-f complex subunit 4 from Crocosphaera subtropica (strain ATCC 51142 / BH68) (Cyanothece sp. (strain ATCC 51142)).